The sequence spans 118 residues: MLEFAPICIYLVISLLVSLILLGVPFLFASNSSTYPEKLSAYECGFDPFGDARSRFDIRFYLVSILFIIFDLEVTFFFPWAVSLNKIDLFGFWSMMAFLLILTIGFLYEWKRGALDWE.

The next 3 membrane-spanning stretches (helical) occupy residues 9–29 (IYLVISLLVSLILLGVPFLFA), 62–82 (LVSILFIIFDLEVTFFFPWAV), and 87–107 (IDLFGFWSMMAFLLILTIGFL).

This sequence belongs to the complex I subunit 3 family.

It is found in the mitochondrion membrane. The enzyme catalyses a ubiquinone + NADH + 5 H(+)(in) = a ubiquinol + NAD(+) + 4 H(+)(out). Core subunit of the mitochondrial membrane respiratory chain NADH dehydrogenase (Complex I) that is believed to belong to the minimal assembly required for catalysis. Complex I functions in the transfer of electrons from NADH to the respiratory chain. The immediate electron acceptor for the enzyme is believed to be ubiquinone. This is NADH-ubiquinone oxidoreductase chain 3 (ND3) from Triticum aestivum (Wheat).